Here is a 1210-residue protein sequence, read N- to C-terminus: AF4/FMR2 family member 1 (1210 aa).

Disordered stretches follow at residues methionine 1–tyrosine 45, threonine 73–proline 314, serine 366–valine 957, and threonine 1098–serine 1119. 2 stretches are compositionally biased toward basic and acidic residues: residues asparagine 9–proline 35 and histidine 78–leucine 87. Phosphoserine occurs at positions 199, 206, and 212. The span at histidine 215–lysine 238 shows a compositional bias: polar residues. Threonine 220 is modified (phosphothreonine). The span at serine 245–proline 259 shows a compositional bias: basic and acidic residues. Pro residues predominate over residues alanine 267–leucine 279. Residues histidine 394–threonine 419 show a composition bias toward polar residues. Over residues leucine 423–glutamine 439 the composition is skewed to acidic residues. A compositionally biased stretch (pro residues) spans glutamate 442 to alanine 453. Positions proline 454 to glutamate 472 are enriched in low complexity. A compositionally biased stretch (acidic residues) spans serine 473 to proline 497. Positions glutamate 536–glycine 546 are enriched in basic and acidic residues. Over residues glutamine 586–threonine 602 the composition is skewed to polar residues. Serine 588 carries the phosphoserine modification. Lysine 681 carries the post-translational modification N6-acetyllysine. Over residues proline 688–glutamate 699 the composition is skewed to basic and acidic residues. Position 697 is a phosphothreonine (threonine 697). The span at threonine 707–cysteine 724 shows a compositional bias: polar residues. The segment covering glutamate 732–lysine 747 has biased composition (basic and acidic residues). Serine 750 bears the Phosphoserine mark. The residue at position 755 (threonine 755) is a Phosphothreonine. Positions glycine 816–lysine 834 are enriched in basic and acidic residues. Low complexity predominate over residues serine 871 to proline 880. A compositionally biased stretch (basic and acidic residues) spans asparagine 906 to serine 932. Positions proline 1110–serine 1119 are enriched in low complexity.

This sequence belongs to the AF4 family. Component of the super elongation complex (SEC), at least composed of EAF1, EAF2, CDK9, MLLT3/AF9, AFF (AFF1 or AFF4), the P-TEFb complex and ELL (ELL, ELL2 or ELL3).

The protein resides in the nucleus. The polypeptide is AF4/FMR2 family member 1 (AFF1) (Homo sapiens (Human)).